Consider the following 199-residue polypeptide: FMN-dependent NADH:quinone oxidoreductase (199 aa).

Residues 17 to 19 (SNS) and 87 to 90 (MYNF) contribute to the FMN site.

This sequence belongs to the azoreductase type 1 family. Homodimer. FMN serves as cofactor.

The enzyme catalyses 2 a quinone + NADH + H(+) = 2 a 1,4-benzosemiquinone + NAD(+). The catalysed reaction is N,N-dimethyl-1,4-phenylenediamine + anthranilate + 2 NAD(+) = 2-(4-dimethylaminophenyl)diazenylbenzoate + 2 NADH + 2 H(+). In terms of biological role, quinone reductase that provides resistance to thiol-specific stress caused by electrophilic quinones. Functionally, also exhibits azoreductase activity. Catalyzes the reductive cleavage of the azo bond in aromatic azo compounds to the corresponding amines. The protein is FMN-dependent NADH:quinone oxidoreductase of Mycoplasma mycoides subsp. mycoides SC (strain CCUG 32753 / NCTC 10114 / PG1).